The sequence spans 212 residues: Hemagglutinin 2 (212 aa).

It localises to the secreted. In terms of biological role, induces agglutination of neuraminidase-treated erythrocytes. The sequence is that of Hemagglutinin 2 (hag2) from Eikenella corrodens.